A 249-amino-acid chain; its full sequence is Glutathione S-transferase S1 (249 aa).

Residues 1–38 are compositionally biased toward low complexity; the sequence is MADEAQAPPAEGAPPAEGEAPPPAEGAEGAVEGGEAAP. Residues 1–42 are disordered; sequence MADEAQAPPAEGAPPAEGEAPPPAEGAEGAVEGGEAAPPAEP. One can recognise a GST N-terminal domain in the interval 48-125; it reads HSYTLFYFNV…FLAKTVGLCG (78 aa). Glutathione is bound by residues tyrosine 54, tryptophan 85, lysine 89, 96 to 97, and 109 to 110; these read QM and QS. The 123-residue stretch at 127–249 folds into the GST C-terminal domain; that stretch reads TPWEDLQIDI…WIEKRPVTEV (123 aa).

The protein belongs to the GST superfamily. Sigma family. In terms of assembly, homodimer.

It carries out the reaction RX + glutathione = an S-substituted glutathione + a halide anion + H(+). Conjugation of reduced glutathione to a wide number of exogenous and endogenous hydrophobic electrophiles. May be involved in the detoxification of metabolites produced during cellular division and morphogenesis. The chain is Glutathione S-transferase S1 from Drosophila melanogaster (Fruit fly).